The primary structure comprises 1381 residues: Hepatocyte growth factor receptor (1381 aa).

The first 24 residues, 1 to 24, serve as a signal peptide directing secretion; the sequence is MKAPTVLTPGILVLLFILVQRSNG. Residues 25–932 lie on the Extracellular side of the membrane; it reads ECKEALTKSE…VIVQPDQNFT (908 aa). A Sema domain is found at 27–515; the sequence is KEALTKSEMN…TGKKITKIPL (489 aa). A glycan (N-linked (GlcNAc...) asparagine) is linked at Asn-45. 4 disulfide bridges follow: Cys-95-Cys-101, Cys-98-Cys-160, Cys-133-Cys-141, and Cys-172-Cys-175. A glycan (N-linked (GlcNAc...) asparagine) is linked at Asn-106. N-linked (GlcNAc...) asparagine glycosylation occurs at Asn-149. Asn-202 carries an N-linked (GlcNAc...) asparagine glycan. 2 cysteine pairs are disulfide-bonded: Cys-298-Cys-363 and Cys-385-Cys-397. Residue Asn-399 is glycosylated (N-linked (GlcNAc...) asparagine). 4 cysteine pairs are disulfide-bonded: Cys-520–Cys-538, Cys-526–Cys-561, Cys-529–Cys-545, and Cys-541–Cys-551. IPT/TIG domains lie at 563–655, 657–739, and 742–836; these read PTIY…FSYV, PIIT…FSYR, and PIVY…LIYV. The O-linked (Man) threonine glycan is linked to Thr-582. Asn-607 and Asn-635 each carry an N-linked (GlcNAc...) asparagine glycan. O-linked (Man) threonine glycosylation is found at Thr-676 and Thr-761. Residues Asn-785, Asn-879, and Asn-930 are each glycosylated (N-linked (GlcNAc...) asparagine). The helical transmembrane segment at 933–955 threads the bilayer; the sequence is GLIAGVVSISIALLLLLGLFLWL. Over 956 to 1381 the chain is Cytoplasmic; that stretch reads KKRKQIKDLG…QDNADGEVDT (426 aa). A Phosphoserine modification is found at Ser-966. Thr-977 carries the post-translational modification Phosphothreonine. Phosphoserine is present on residues Ser-990, Ser-997, and Ser-1000. Phosphotyrosine is present on Tyr-1003. Residues 1078-1345 enclose the Protein kinase domain; the sequence is VHFNEVIGRG…RISAIFSAFI (268 aa). ATP-binding positions include 1084–1092 and Lys-1110; that span reads IGRGHFGCV. The Proton acceptor role is filled by Asp-1204. An interaction with RANBP9 region spans residues 1212-1381; that stretch reads LDEKFTVKVA…QDNADGEVDT (170 aa). A Phosphotyrosine modification is found at Tyr-1230. Phosphotyrosine; by autocatalysis is present on residues Tyr-1234 and Tyr-1235. Thr-1289 is modified (phosphothreonine). Residues 1320–1359 are interaction with MUC20; sequence WHPKAEMRPSFSELVSRISAIFSAFIGEHYVHVNATYVNV. Residues Tyr-1349 and Tyr-1356 each carry the phosphotyrosine; by autocatalysis modification. A Phosphotyrosine modification is found at Tyr-1365.

It belongs to the protein kinase superfamily. Tyr protein kinase family. As to quaternary structure, heterodimer made of an alpha chain (50 kDa) and a beta chain (145 kDa) which are disulfide linked. Binds PLXNB1. Interacts when phosphorylated with downstream effectors including STAT3, PIK3R1, SRC, PCLG1, GRB2 and GAB1. Interacts with SPSB1, SPSB2 and SPSB4. Interacts with INPP5D/SHIP1. When phosphorylated at Tyr-1356, interacts with INPPL1/SHIP2. Interacts with RANBP9 and RANBP10, as well as SPSB1, SPSB2, SPSB3 and SPSB4. SPSB1 binding occurs in the presence and in the absence of HGF, however HGF treatment has a positive effect on this interaction. Interacts with MUC20; prevents interaction with GRB2 and suppresses hepatocyte growth factor-induced cell proliferation. Interacts with GRB10. Interacts with PTPN1 and PTPN2. Interacts with tensin TNS3. Interacts (when phosphorylated) with tensin TNS4 (via SH2 domain); the interaction increases MET protein stability by inhibiting MET endocytosis and subsequent lysosomal degradation. Autophosphorylated in response to ligand binding on Tyr-1234 and Tyr-1235 in the kinase domain leading to further phosphorylation of Tyr-1349 and Tyr-1356 in the C-terminal multifunctional docking site. Dephosphorylated by PTPRJ at Tyr-1349 and Tyr-1365. Dephosphorylated by PTPN1 and PTPN2. Post-translationally, ubiquitinated. Ubiquitination by CBL regulates the receptor stability and activity through proteasomal degradation. In terms of processing, O-mannosylation of IPT/TIG domains by TMEM260 is required for protein maturation. O-mannosylated residues are composed of single mannose glycans that are not elongated or modified.

Its subcellular location is the membrane. The enzyme catalyses L-tyrosyl-[protein] + ATP = O-phospho-L-tyrosyl-[protein] + ADP + H(+). In its inactive state, the C-terminal tail interacts with the catalytic domain and inhibits the kinase activity. Upon ligand binding, the C-terminal tail is displaced and becomes phosphorylated, thus increasing the kinase activity. Functionally, receptor tyrosine kinase that transduces signals from the extracellular matrix into the cytoplasm by binding to hepatocyte growth factor/HGF ligand. Regulates many physiological processes including proliferation, scattering, morphogenesis and survival. Ligand binding at the cell surface induces autophosphorylation of MET on its intracellular domain that provides docking sites for downstream signaling molecules. Following activation by ligand, interacts with the PI3-kinase subunit PIK3R1, PLCG1, SRC, GRB2, STAT3 or the adapter GAB1. Recruitment of these downstream effectors by MET leads to the activation of several signaling cascades including the RAS-ERK, PI3 kinase-AKT, or PLCgamma-PKC. The RAS-ERK activation is associated with the morphogenetic effects while PI3K/AKT coordinates prosurvival effects. During embryonic development, MET signaling plays a role in gastrulation, development and migration of muscles and neuronal precursors, angiogenesis and kidney formation. In adults, participates in wound healing as well as organ regeneration and tissue remodeling. Also promotes differentiation and proliferation of hematopoietic cells. This Ateles geoffroyi (Black-handed spider monkey) protein is Hepatocyte growth factor receptor (MET).